The chain runs to 892 residues: Alanine--tRNA ligase (892 aa).

4 residues coordinate Zn(2+): histidine 580, histidine 584, cysteine 682, and histidine 686.

It belongs to the class-II aminoacyl-tRNA synthetase family. Zn(2+) serves as cofactor.

The protein localises to the cytoplasm. It carries out the reaction tRNA(Ala) + L-alanine + ATP = L-alanyl-tRNA(Ala) + AMP + diphosphate. Catalyzes the attachment of alanine to tRNA(Ala) in a two-step reaction: alanine is first activated by ATP to form Ala-AMP and then transferred to the acceptor end of tRNA(Ala). Also edits incorrectly charged Ser-tRNA(Ala) and Gly-tRNA(Ala) via its editing domain. This is Alanine--tRNA ligase from Salinispora tropica (strain ATCC BAA-916 / DSM 44818 / JCM 13857 / NBRC 105044 / CNB-440).